A 527-amino-acid polypeptide reads, in one-letter code: Phosphoenolpyruvate carboxykinase (ATP) (527 aa).

Residues Arg-56, Tyr-192, and Lys-198 each coordinate substrate. ATP contacts are provided by residues Lys-198, His-217, and 233 to 241 (GLSGTGKTT). Lys-198 and His-217 together coordinate Mn(2+). Asp-254 is a Mn(2+) binding site. ATP contacts are provided by Glu-282, Arg-319, and Thr-444. Arg-319 serves as a coordination point for substrate.

This sequence belongs to the phosphoenolpyruvate carboxykinase (ATP) family. Mn(2+) serves as cofactor.

The protein resides in the cytoplasm. It catalyses the reaction oxaloacetate + ATP = phosphoenolpyruvate + ADP + CO2. The protein operates within carbohydrate biosynthesis; gluconeogenesis. Functionally, involved in the gluconeogenesis. Catalyzes the conversion of oxaloacetate (OAA) to phosphoenolpyruvate (PEP) through direct phosphoryl transfer between the nucleoside triphosphate and OAA. The protein is Phosphoenolpyruvate carboxykinase (ATP) of Bacillus velezensis (strain DSM 23117 / BGSC 10A6 / LMG 26770 / FZB42) (Bacillus amyloliquefaciens subsp. plantarum).